The sequence spans 402 residues: 2,3-bisphosphoglycerate-independent phosphoglycerate mutase (402 aa).

The tract at residues 155–174 is disordered; sequence SMVSDSDPHRENERPMEVRP. Positions 160–174 are enriched in basic and acidic residues; it reads SDPHRENERPMEVRP.

It belongs to the BPG-independent phosphoglycerate mutase family. A-PGAM subfamily.

It carries out the reaction (2R)-2-phosphoglycerate = (2R)-3-phosphoglycerate. The protein operates within carbohydrate degradation; glycolysis; pyruvate from D-glyceraldehyde 3-phosphate: step 3/5. In terms of biological role, catalyzes the interconversion of 2-phosphoglycerate and 3-phosphoglycerate. This Picrophilus torridus (strain ATCC 700027 / DSM 9790 / JCM 10055 / NBRC 100828 / KAW 2/3) protein is 2,3-bisphosphoglycerate-independent phosphoglycerate mutase.